The sequence spans 435 residues: tRNA modification GTPase MnmE (435 aa).

Positions 20, 77, and 117 each coordinate (6S)-5-formyl-5,6,7,8-tetrahydrofolate. The 146-residue stretch at 214–359 (GFKIVIVGAP…FMKELESFCL (146 aa)) folds into the TrmE-type G domain. Residues 224–229 (NSGKSS), 243–249 (TEEAGTT), and 268–271 (DTAG) contribute to the GTP site. Positions 228 and 249 each coordinate Mg(2+). Lysine 435 is a (6S)-5-formyl-5,6,7,8-tetrahydrofolate binding site.

The protein belongs to the TRAFAC class TrmE-Era-EngA-EngB-Septin-like GTPase superfamily. TrmE GTPase family. As to quaternary structure, homodimer. Heterotetramer of two MnmE and two MnmG subunits. K(+) is required as a cofactor.

It localises to the cytoplasm. Functionally, exhibits a very high intrinsic GTPase hydrolysis rate. Involved in the addition of a carboxymethylaminomethyl (cmnm) group at the wobble position (U34) of certain tRNAs, forming tRNA-cmnm(5)s(2)U34. This chain is tRNA modification GTPase MnmE, found in Bartonella henselae (strain ATCC 49882 / DSM 28221 / CCUG 30454 / Houston 1) (Rochalimaea henselae).